Reading from the N-terminus, the 132-residue chain is Ribosome-binding factor A (132 aa).

The protein belongs to the RbfA family. In terms of assembly, monomer. Binds 30S ribosomal subunits, but not 50S ribosomal subunits or 70S ribosomes.

It localises to the cytoplasm. Its function is as follows. One of several proteins that assist in the late maturation steps of the functional core of the 30S ribosomal subunit. Associates with free 30S ribosomal subunits (but not with 30S subunits that are part of 70S ribosomes or polysomes). Required for efficient processing of 16S rRNA. May interact with the 5'-terminal helix region of 16S rRNA. The chain is Ribosome-binding factor A from Burkholderia lata (strain ATCC 17760 / DSM 23089 / LMG 22485 / NCIMB 9086 / R18194 / 383).